We begin with the raw amino-acid sequence, 333 residues long: tRNA dimethylallyltransferase (333 aa).

Position 23 to 30 (23 to 30) interacts with ATP; sequence GPTGAGKT. Position 25–30 (25–30) interacts with substrate; it reads TGAGKT. Interaction with substrate tRNA stretches follow at residues 53-56 and 177-181; these read DSAL and QRVQR.

Belongs to the IPP transferase family. In terms of assembly, monomer. It depends on Mg(2+) as a cofactor.

It carries out the reaction adenosine(37) in tRNA + dimethylallyl diphosphate = N(6)-dimethylallyladenosine(37) in tRNA + diphosphate. Its function is as follows. Catalyzes the transfer of a dimethylallyl group onto the adenine at position 37 in tRNAs that read codons beginning with uridine, leading to the formation of N6-(dimethylallyl)adenosine (i(6)A). This chain is tRNA dimethylallyltransferase, found in Polynucleobacter asymbioticus (strain DSM 18221 / CIP 109841 / QLW-P1DMWA-1) (Polynucleobacter necessarius subsp. asymbioticus).